Reading from the N-terminus, the 501-residue chain is Lysine--tRNA ligase (501 aa).

Mg(2+) contacts are provided by Glu404 and Glu411.

The protein belongs to the class-II aminoacyl-tRNA synthetase family. In terms of assembly, homodimer. Requires Mg(2+) as cofactor.

Its subcellular location is the cytoplasm. The enzyme catalyses tRNA(Lys) + L-lysine + ATP = L-lysyl-tRNA(Lys) + AMP + diphosphate. The polypeptide is Lysine--tRNA ligase (Campylobacter jejuni subsp. doylei (strain ATCC BAA-1458 / RM4099 / 269.97)).